A 69-amino-acid polypeptide reads, in one-letter code: Protein SlyX homolog (69 aa).

It belongs to the SlyX family.

This Maricaulis maris (strain MCS10) (Caulobacter maris) protein is Protein SlyX homolog.